The following is a 136-amino-acid chain: Histone H2B (136 aa).

Residues 1-10 (MPPKAADKKP) are compositionally biased toward basic and acidic residues. The disordered stretch occupies residues 1 to 44 (MPPKAADKKPAAKAPVASKAPEKKDAGKKTASTGEKKKRTKARR). 2 positions are modified to N6-acetyllysine; alternate: lysine 8 and lysine 9. Glycyl lysine isopeptide (Lys-Gly) (interchain with G-Cter in SUMO); alternate cross-links involve residues lysine 8 and lysine 9. N6-acetyllysine is present on lysine 13. Lysine 23 is modified (N6-acetyllysine; alternate). Lysine 23 is covalently cross-linked (Glycyl lysine isopeptide (Lys-Gly) (interchain with G-Cter in SUMO); alternate). Residue lysine 24 forms a Glycyl lysine isopeptide (Lys-Gly) (interchain with G-Cter in SUMO) linkage. Residue lysine 130 forms a Glycyl lysine isopeptide (Lys-Gly) (interchain with G-Cter in ubiquitin) linkage.

It belongs to the histone H2B family. As to quaternary structure, the nucleosome is a histone octamer containing two molecules each of H2A, H2B, H3 and H4 assembled in one H3-H4 heterotetramer and two H2A-H2B heterodimers. The octamer wraps approximately 147 bp of DNA. In terms of processing, monoubiquitinated to form H2BK123ub1. H2BK123ub1 gives a specific tag for epigenetic transcriptional activation and is also prerequisite for H3K4me and H3K79me formation. H2BK123ub1 also modulates the formation of double-strand breaks during meiosis and is a prerequisite for DNA-damage checkpoint activation. Acetylated by GCN5 to form H2BK11ac and H2BK16ac. H2BK16ac can also be formed by ESA1. Acetylation of N-terminal lysines and particularly formation of H2BK11acK16ac has a positive effect on transcription. Post-translationally, sumoylation to form H2BK6su or H2BK7su, and probably also H2BK16su or H2BK17su, occurs preferentially near the telomeres and represses gene transcription.

The protein localises to the nucleus. It localises to the chromosome. In terms of biological role, core component of nucleosome. Nucleosomes wrap and compact DNA into chromatin, limiting DNA accessibility to the cellular machineries which require DNA as a template. Histones thereby play a central role in transcription regulation, DNA repair, DNA replication and chromosomal stability. DNA accessibility is regulated via a complex set of post-translational modifications of histones, also called histone code, and nucleosome remodeling. The protein is Histone H2B (hh2b) of Rosellinia necatrix (White root-rot fungus).